The sequence spans 276 residues: UPF0328 protein ECU04_0100 (276 aa).

The interval Met-1–His-24 is disordered.

This sequence belongs to the UPF0328 family.

This chain is UPF0328 protein ECU04_0100, found in Encephalitozoon cuniculi (strain GB-M1) (Microsporidian parasite).